A 401-amino-acid chain; its full sequence is Probable plasmid-partitioning protein ParB (401 aa).

The interval 232–272 (KTRGKENARDKAAAVKEEVKPSKKPKADNGEKTPKGRSHEE) is disordered.

This sequence belongs to the ParB family.

The protein is Probable plasmid-partitioning protein ParB of Xylella fastidiosa (strain 9a5c).